Here is a 158-residue protein sequence, read N- to C-terminus: Transcription elongation factor GreA (158 aa).

It belongs to the GreA/GreB family.

Its function is as follows. Necessary for efficient RNA polymerase transcription elongation past template-encoded arresting sites. The arresting sites in DNA have the property of trapping a certain fraction of elongating RNA polymerases that pass through, resulting in locked ternary complexes. Cleavage of the nascent transcript by cleavage factors such as GreA or GreB allows the resumption of elongation from the new 3'terminus. GreA releases sequences of 2 to 3 nucleotides. The protein is Transcription elongation factor GreA of Psychrobacter cryohalolentis (strain ATCC BAA-1226 / DSM 17306 / VKM B-2378 / K5).